Consider the following 215-residue polypeptide: Protein-L-isoaspartate O-methyltransferase (215 aa).

Ser-62 is a catalytic residue.

The protein belongs to the methyltransferase superfamily. L-isoaspartyl/D-aspartyl protein methyltransferase family.

The protein resides in the cytoplasm. It carries out the reaction [protein]-L-isoaspartate + S-adenosyl-L-methionine = [protein]-L-isoaspartate alpha-methyl ester + S-adenosyl-L-homocysteine. Catalyzes the methyl esterification of L-isoaspartyl residues in peptides and proteins that result from spontaneous decomposition of normal L-aspartyl and L-asparaginyl residues. It plays a role in the repair and/or degradation of damaged proteins. The polypeptide is Protein-L-isoaspartate O-methyltransferase (Bradyrhizobium sp. (strain BTAi1 / ATCC BAA-1182)).